The sequence spans 742 residues: Synaptic vesicle glycoprotein 2A (742 aa).

Positions 1–57 (MEEGFRDRAAFIRGAKDIAKEVKKHAAKKVVKGLDRVQDEYSRRSYSRFEEEDDDDD) are interaction with SYT1. At 1–169 (MEEGFRDRAA…GHGRFQWTLY (169 aa)) the chain is on the cytoplasmic side. A compositionally biased stretch (basic and acidic residues) spans 40-49 (EYSRRSYSRF). A disordered region spans residues 40–145 (EYSRRSYSRF…RGEAQRRKDR (106 aa)). Residues Ser-80 and Ser-81 each carry the phosphoserine modification. At Thr-84 the chain carries Phosphothreonine. Residues 122 to 137 (VRGGLSDGEGPPGGRG) show a composition bias toward gly residues. Ser-127 is modified (phosphoserine). Residues 170-190 (FVLGLALMADGVEVFVVGFVL) form a helical membrane-spanning segment. Residues 191–205 (PSAEKDMCLSDSNKG) are Extracellular-facing. Residues 206-226 (MLGLIVYLGMMVGAFLWGGLA) traverse the membrane as a helical segment. Topologically, residues 227 to 233 (DRLGRRQ) are cytoplasmic. The helical transmembrane segment at 234–254 (CLLISLSVNSVFAFFSSFVQG) threads the bilayer. Residues 255–262 (YGTFLFCR) are Extracellular-facing. Residues 263 to 283 (LLSGVGIGGSIPIVFSYFSEF) traverse the membrane as a helical segment. Residues 284–294 (LAQEKRGEHLS) are Cytoplasmic-facing. The chain crosses the membrane as a helical span at residues 295–315 (WLCMFWMIGGVYAAAMAWAII). Topologically, residues 316–334 (PHYGWSFQMGSAYQFHSWR) are extracellular. The chain crosses the membrane as a helical span at residues 335 to 355 (VFVLVCAFPSVFAIGALTTQP). Residues 356 to 447 (ESPRFFLENG…CFSPEYRRIT (92 aa)) are Cytoplasmic-facing. Ser-393 is subject to Phosphoserine. The helical transmembrane segment at 448 to 468 (LMMMGVWFTMSFSYYGLTVWF) threads the bilayer. Residues 469-598 (PDMIRHLQAV…GTGEGAYMVY (130 aa)) lie on the Extracellular side of the membrane. Position 480 is a phosphotyrosine (Tyr-480). Asn-498, Asn-548, and Asn-573 each carry an N-linked (GlcNAc...) asparagine glycan. Residues 599–619 (FVSFLGTLAVLPGNIVSALLM) form a helical membrane-spanning segment. Residues 620-626 (DKIGRLR) lie on the Cytoplasmic side of the membrane. A helical membrane pass occupies residues 627–647 (MLAGSSVLSCVSCFFLSFGNS). Over 648–651 (ESAM) the chain is Extracellular. Residues 652–672 (IALLCLFGGVSIASWNALDVL) form a helical membrane-spanning segment. The Cytoplasmic portion of the chain corresponds to 673–685 (TVELYPSDKRTTA). A helical membrane pass occupies residues 686-708 (FGFLNALCKLAAVLGISIFTSFV). Residues 709–712 (GITK) lie on the Extracellular side of the membrane. The helical transmembrane segment at 713 to 731 (AAPILFASAALALGSSLAL) threads the bilayer. Topologically, residues 732–742 (KLPETRGQVLQ) are cytoplasmic.

It belongs to the major facilitator superfamily. In terms of assembly, interacts with SYT1/synaptotagmin-1 in a calcium-dependent manner. Binds the adapter protein complex AP-2. (Microbial infection) Interacts with C.botulinum neurotoxin type A (BoNT/A, botA). Post-translationally, phosphorylation by CK1 of the N-terminal cytoplasmic domain regulates interaction with SYT1. N-glycosylated. In terms of tissue distribution, expressed in conventional synapses and cone ribbon synapses in the retina (at protein level). Expressed in diaphragm motor nerve terminals (at protein level). Expressed in hippocampus neurons (at protein level).

The protein localises to the presynapse. Its subcellular location is the cytoplasmic vesicle. It localises to the secretory vesicle. The protein resides in the synaptic vesicle membrane. Plays a role in the control of regulated secretion in neural and endocrine cells, enhancing selectively low-frequency neurotransmission. Positively regulates vesicle fusion by maintaining the readily releasable pool of secretory vesicles. Functionally, (Microbial infection) Receptor for C.botulinum neurotoxin type A (BoNT/A, botA); the toxin probably binds via extracellular loop 4. In terms of biological role, (Microbial infection) Possible receptor for C.botulinum neurotoxin type D (BoNT/D, botD); BoNT/D does not bind to extracellular loop 4 as do BoNT/A and BoNT/E. Its function is as follows. (Microbial infection) Receptor for C.botulinum neurotoxin type E (BoNT/E); the toxin probably binds via extracellular loop 4. It probably requires glycosylation of Asn-573. The polypeptide is Synaptic vesicle glycoprotein 2A (Sv2a) (Mus musculus (Mouse)).